The chain runs to 120 residues: Putative pterin-4-alpha-carbinolamine dehydratase (120 aa).

The protein belongs to the pterin-4-alpha-carbinolamine dehydratase family.

The catalysed reaction is (4aS,6R)-4a-hydroxy-L-erythro-5,6,7,8-tetrahydrobiopterin = (6R)-L-erythro-6,7-dihydrobiopterin + H2O. The sequence is that of Putative pterin-4-alpha-carbinolamine dehydratase from Saccharomyces cerevisiae (strain ATCC 204508 / S288c) (Baker's yeast).